Consider the following 320-residue polypeptide: Peroxidase 66 (320 aa).

An N-terminal signal peptide occupies residues 1 to 29; the sequence is MAASVSASCLNRLSSLAVVLVALASAASA. Q30 carries the pyrrolidone carboxylic acid modification. Cystine bridges form between C40-C118, C73-C78, C124-C315, and C202-C227. Catalysis depends on H71, which acts as the Proton acceptor. Residues D72, V75, G77, D79, and S81 each contribute to the Ca(2+) site. 2 N-linked (GlcNAc...) asparagine glycosylation sites follow: N85 and N96. A substrate-binding site is contributed by P165. Position 195 (H195) interacts with heme b. T196 contacts Ca(2+). Residue N211 is glycosylated (N-linked (GlcNAc...) asparagine). Ca(2+) contacts are provided by D239, T242, and D247.

It belongs to the peroxidase family. Classical plant (class III) peroxidase subfamily. The cofactor is heme b. Ca(2+) is required as a cofactor.

It localises to the secreted. The catalysed reaction is 2 a phenolic donor + H2O2 = 2 a phenolic radical donor + 2 H2O. Functionally, removal of H(2)O(2), oxidation of toxic reductants, biosynthesis and degradation of lignin, suberization, auxin catabolism, response to environmental stresses such as wounding, pathogen attack and oxidative stress. These functions might be dependent on each isozyme/isoform in each plant tissue. The sequence is that of Peroxidase 66 (PER66) from Zea mays (Maize).